A 218-amino-acid polypeptide reads, in one-letter code: N-(5'-phosphoribosyl)anthranilate isomerase (218 aa).

The protein belongs to the TrpF family.

It catalyses the reaction N-(5-phospho-beta-D-ribosyl)anthranilate = 1-(2-carboxyphenylamino)-1-deoxy-D-ribulose 5-phosphate. It functions in the pathway amino-acid biosynthesis; L-tryptophan biosynthesis; L-tryptophan from chorismate: step 3/5. The sequence is that of N-(5'-phosphoribosyl)anthranilate isomerase from Bordetella parapertussis (strain 12822 / ATCC BAA-587 / NCTC 13253).